We begin with the raw amino-acid sequence, 458 residues long: NADH-ubiquinone oxidoreductase chain 4 (458 aa).

13 helical membrane-spanning segments follow: residues 22 to 42 (FFWTAFISSSFLMPFLFFIFT), 63 to 83 (MISAPLVFLSLWMLPLMALAS), 96 to 116 (LLYITILIIMQTLLILTFLST), 117 to 137 (NLMNFYILFESSLIPILLIIF), 150 to 170 (IYLSFYTLIGSLPLLASLLFL), 194 to 214 (ILWLGCFSALLIKTPLYGFHL), 224 to 244 (TIAGSMTLAALMLKLGGYGMI), 257 to 277 (LSLILISIALWGAVMTSFICL), 284 to 306 (ALIAYSSVSHMGLMTASIMTLSL), 311 to 333 (GAFIMMIAHGLSSSALFFLANSN), 350 to 370 (MLLPLTSLWWLFIILTNLAMP), 391 to 413 (LTFPFLALTMVITTTYSMSMFML), and 434 to 454 (LTLFLHLFPMIAIMAYPNMII).

This sequence belongs to the complex I subunit 4 family.

Its subcellular location is the mitochondrion membrane. It catalyses the reaction a ubiquinone + NADH + 5 H(+)(in) = a ubiquinol + NAD(+) + 4 H(+)(out). Core subunit of the mitochondrial membrane respiratory chain NADH dehydrogenase (Complex I) that is believed to belong to the minimal assembly required for catalysis. Complex I functions in the transfer of electrons from NADH to the respiratory chain. The immediate electron acceptor for the enzyme is believed to be ubiquinone. The sequence is that of NADH-ubiquinone oxidoreductase chain 4 (MT-ND4) from Myxine glutinosa (Atlantic hagfish).